Here is a 75-residue protein sequence, read N- to C-terminus: Putative primary metabolism protein HVA1 (75 aa).

Residues Met-1 to Val-13 show a composition bias toward polar residues. Disordered stretches follow at residues Met-1–Gly-24 and Ala-40–Lys-75.

In terms of biological role, may play a role in primary metabolism. This chain is Putative primary metabolism protein HVA1, found in Cryptococcus neoformans var. grubii serotype A (strain H99 / ATCC 208821 / CBS 10515 / FGSC 9487) (Filobasidiella neoformans var. grubii).